The chain runs to 412 residues: Gamma-glutamyl phosphate reductase (412 aa).

Belongs to the gamma-glutamyl phosphate reductase family.

It is found in the cytoplasm. The enzyme catalyses L-glutamate 5-semialdehyde + phosphate + NADP(+) = L-glutamyl 5-phosphate + NADPH + H(+). It functions in the pathway amino-acid biosynthesis; L-proline biosynthesis; L-glutamate 5-semialdehyde from L-glutamate: step 2/2. Its function is as follows. Catalyzes the NADPH-dependent reduction of L-glutamate 5-phosphate into L-glutamate 5-semialdehyde and phosphate. The product spontaneously undergoes cyclization to form 1-pyrroline-5-carboxylate. This chain is Gamma-glutamyl phosphate reductase, found in Actinobacillus pleuropneumoniae serotype 5b (strain L20).